The primary structure comprises 98 residues: Lipolysis-activating peptide 1-alpha chain (98 aa).

A signal peptide spans 1 to 22 (MMKFVLFGMIVILFSLMGSIRG). Residues 26-89 (PGNYPTNAYG…IWNAVKNHCT (64 aa)) enclose the LCN-type CS-alpha/beta domain. Intrachain disulfides connect Cys40/Cys63, Cys49/Cys68, and Cys53/Cys70. Position 96 is an asparagine amide (Asn96).

Belongs to the long (3 C-C) scorpion toxin superfamily. In terms of assembly, monomer (edited version) and heterodimer (non-edited version) of this alpha chain and a beta chain (AC Q95P90). Expressed by the venom gland.

The protein localises to the secreted. The heterodimer non-edited LVP1 induces lipolysis in rat adipocytes. Induction of lipolysis by LVP1 appears to be mediated through the beta-2 adrenergic receptor pathway (ADRB2). In terms of biological role, the edited BmKBTx, similar to beta-toxins, may modulate voltage-gated sodium channels (Nav) and may block voltage-gated potassium channels (Kv). Seems to be a rare component in the venom. The chain is Lipolysis-activating peptide 1-alpha chain (LVP1a) from Olivierus martensii (Manchurian scorpion).